Here is a 382-residue protein sequence, read N- to C-terminus: Galactokinase (382 aa).

Residue 34–37 (EHTD) participates in substrate binding. 124 to 130 (GAGLSSS) is a binding site for ATP. The Mg(2+) site is built by S130 and E162. D174 functions as the Proton acceptor in the catalytic mechanism. Y223 is a binding site for substrate.

It belongs to the GHMP kinase family. GalK subfamily.

It localises to the cytoplasm. The enzyme catalyses alpha-D-galactose + ATP = alpha-D-galactose 1-phosphate + ADP + H(+). Its pathway is carbohydrate metabolism; galactose metabolism. Catalyzes the transfer of the gamma-phosphate of ATP to D-galactose to form alpha-D-galactose-1-phosphate (Gal-1-P). In Shigella boydii serotype 18 (strain CDC 3083-94 / BS512), this protein is Galactokinase.